Here is a 225-residue protein sequence, read N- to C-terminus: Paired immunoglobulin-like type 2 receptor beta-2 (225 aa).

The first 31 residues, 1–31 (MALLISLPGETPAMAQILLLLSSACLHAGNS), serve as a signal peptide directing secretion. At 32–195 (ARSNGGNDFG…NPSLMNLGAM (164 aa)) the chain is on the extracellular side. N-linked (GlcNAc...) asparagine glycans are attached at residues Asn-90, Asn-107, and Asn-160. Residues 196 to 216 (VTMLLAKVVVIILVYGWMIFL) form a helical membrane-spanning segment. Residues 217–225 (RWKQRPDPA) lie on the Cytoplasmic side of the membrane.

It is found in the membrane. Its function is as follows. Paired receptors consist of highly related activating and inhibitory receptors and are widely involved in the regulation of the immune system. PILRB2 is probably a cellular signaling activating receptor that associates with ITAM-bearing adapter molecules on the cell surface. The polypeptide is Paired immunoglobulin-like type 2 receptor beta-2 (Pilrb2) (Mus musculus (Mouse)).